A 266-amino-acid chain; its full sequence is Apolipoprotein A-I (266 aa).

Residues Met1–Ala18 form the signal peptide. A run of 2 repeats spans residues Leu67 to Gly88 and Pro89 to Asn110. The segment at Leu67–Gln266 is 10 X approximate tandem repeats. A Methionine sulfoxide modification is found at Met109. A 3; half-length repeat occupies Lys111 to Gln121. 5 tandem repeats follow at residues Pro122–Ala143, Pro144–Ser165, Pro166–Ala187, Pro188–Gly209, and Ala210–Lys231. A 9; half-length repeat occupies Pro232–Leu242. Repeat unit 10 spans residues Pro243–Gln266.

Belongs to the apolipoprotein A1/A4/E family. Homodimer. Interacts with APOA1BP and CLU. Component of a sperm activating protein complex (SPAP), consisting of APOA1, an immunoglobulin heavy chain, an immunoglobulin light chain and albumin. Interacts with NDRG1. Interacts with SCGB3A2. Interacts with NAXE and YJEFN3. Glycosylated. In terms of processing, palmitoylated. Post-translationally, phosphorylation sites are present in the extracellular medium.

It is found in the secreted. Functionally, participates in the reverse transport of cholesterol from tissues to the liver for excretion by promoting cholesterol efflux from tissues and by acting as a cofactor for the lecithin cholesterol acyltransferase (LCAT). As part of the SPAP complex, activates spermatozoa motility. This Odobenus rosmarus divergens (Pacific walrus) protein is Apolipoprotein A-I (APOA1).